Here is a 128-residue protein sequence, read N- to C-terminus: Cyclin-dependent protein kinase inhibitor SMR1 (128 aa).

Residues 17-74 form a disordered region; that stretch reads PIKIRSKTSKTKKDEGDDDEDDLRCSTPTSQEHKIPAVVDSPPPPPRKPRPPPSAPSA. Over residues 57 to 71 the composition is skewed to pro residues; it reads SPPPPPRKPRPPPSA.

Interacts with CDKB1-1. Interacts with CPR5. As to expression, expressed in roots, leaves, stems, siliques and flowers. Expressed in the root elongation zone.

It localises to the nucleus. In terms of biological role, probable cyclin-dependent protein kinase (CDK) inhibitor that functions as a repressor of mitosis in the endoreduplication cell cycle. Cooperates with SIM and SMR2 to promote endoreplication during leaf development. Specifically regulates endoreduplication in epidermal pavement cells to produce the cell size pattern. Is necessary for giant cell formation. Positive regulator of effector-triggered immunity (ETI). The chain is Cyclin-dependent protein kinase inhibitor SMR1 from Arabidopsis thaliana (Mouse-ear cress).